The chain runs to 229 residues: Orotate phosphoribosyltransferase (229 aa).

5-phospho-alpha-D-ribose 1-diphosphate contacts are provided by residues arginine 107, lysine 108, lysine 111, histidine 113, and 133 to 141; that span reads EDLTTAGGS. Position 137 (threonine 137) interacts with orotate.

It belongs to the purine/pyrimidine phosphoribosyltransferase family. PyrE subfamily. Homodimer. Mg(2+) is required as a cofactor.

It catalyses the reaction orotidine 5'-phosphate + diphosphate = orotate + 5-phospho-alpha-D-ribose 1-diphosphate. It functions in the pathway pyrimidine metabolism; UMP biosynthesis via de novo pathway; UMP from orotate: step 1/2. In terms of biological role, catalyzes the transfer of a ribosyl phosphate group from 5-phosphoribose 1-diphosphate to orotate, leading to the formation of orotidine monophosphate (OMP). This is Orotate phosphoribosyltransferase from Rhizobium etli (strain ATCC 51251 / DSM 11541 / JCM 21823 / NBRC 15573 / CFN 42).